The following is a 129-amino-acid chain: Glycine cleavage system H protein (129 aa).

The 83-residue stretch at 24–106 folds into the Lipoyl-binding domain; the sequence is SYTVGISEHA…FGDGWFFRVM (83 aa). Lys65 carries the post-translational modification N6-lipoyllysine.

It belongs to the GcvH family. As to quaternary structure, the glycine cleavage system is composed of four proteins: P, T, L and H. The cofactor is (R)-lipoate.

In terms of biological role, the glycine cleavage system catalyzes the degradation of glycine. The H protein shuttles the methylamine group of glycine from the P protein to the T protein. This chain is Glycine cleavage system H protein, found in Shewanella woodyi (strain ATCC 51908 / MS32).